We begin with the raw amino-acid sequence, 227 residues long: MNSSGDNAGFEWWRRTMQYKTGIGLTPEEKTRYEDDSKARELKKECLKCYEYRDWMLKYSPTVRFMVQAITKLNKGSDSKFDDSKIICDYCPDWKSGGFHPELGILLCQNRLRDKWHLEDTLSHELIHYFDDLKWQIDWLNLKHHACSEIRASSLSGECRFWEEFKRRGFRTGFHVARGHQDCVRRRAIISVSGNPNCQSKEHAAKIVDEVWDSCFADTRPFDEIYR.

A divalent metal cation is bound at residue H124. The active site involves E125. H128 is an a divalent metal cation binding site.

This sequence belongs to the peptidase M76 family. As to quaternary structure, interacts with ATP6.

The protein resides in the mitochondrion inner membrane. In terms of biological role, has a dual role in the assembly of mitochondrial ATPase. Acts as a protease that removes the N-terminal 10 residues of mitochondrial ATPase CF(0) subunit 6 (ATP6) at the intermembrane space side. Also involved in the correct assembly of the membrane-embedded ATPase CF(0) particle, probably mediating association of ATP6 with the subunit 9 ring. The chain is Mitochondrial inner membrane protease ATP23 (ATP23) from Saccharomyces cerevisiae (strain Lalvin EC1118 / Prise de mousse) (Baker's yeast).